The primary structure comprises 92 residues: Small ribosomal subunit protein uS19 (92 aa).

It belongs to the universal ribosomal protein uS19 family.

Its function is as follows. Protein S19 forms a complex with S13 that binds strongly to the 16S ribosomal RNA. The protein is Small ribosomal subunit protein uS19 of Leptospira biflexa serovar Patoc (strain Patoc 1 / Ames).